The primary structure comprises 134 residues: uncharacterized protein (134 aa).

Residues 1-23 (MWHLRCSNWRGSGVFGMCFSLSG) form the signal peptide. Residue cysteine 24 is the site of N-palmitoyl cysteine attachment. Cysteine 24 carries S-diacylglycerol cysteine lipidation.

The protein localises to the cell membrane. This is an uncharacterized protein from Treponema pallidum (strain Nichols).